Reading from the N-terminus, the 466-residue chain is Coproporphyrinogen III oxidase (466 aa).

Residues 9-14, 34-35, lysine 42, 56-59, valine 254, and 446-448 contribute to the FAD site; these read GAGITG, EA, GPES, and VGL.

The protein belongs to the protoporphyrinogen/coproporphyrinogen oxidase family. Coproporphyrinogen III oxidase subfamily. It depends on FAD as a cofactor.

The protein localises to the cytoplasm. The catalysed reaction is coproporphyrinogen III + 3 O2 = coproporphyrin III + 3 H2O2. The protein operates within porphyrin-containing compound metabolism; protoheme biosynthesis. Its activity is regulated as follows. The generation of protoporphyrin IX, but not coproporphyrin III, is stimulated by heme-bound HemQ. This stimulatory effect is mediated by superoxide. Inhibited by acifluorfen analogs. Involved in coproporphyrin-dependent heme b biosynthesis. Catalyzes the oxidation of coproporphyrinogen III to coproporphyrin III. Can also oxidize protoporphyrinogen IX. The protein is Coproporphyrinogen III oxidase of Staphylococcus aureus (strain NCTC 8325 / PS 47).